The chain runs to 61 residues: MAKDYVTGKKTTFGNKRSHSLNPTRRAWKPNLQKVRILVDGKPKRVWVSTKALKSGKVTRV.

Positions 1 to 24 (MAKDYVTGKKTTFGNKRSHSLNPT) are disordered. Residues 9-23 (KKTTFGNKRSHSLNP) show a composition bias toward polar residues.

Belongs to the bacterial ribosomal protein bL28 family.

This Lactobacillus acidophilus (strain ATCC 700396 / NCK56 / N2 / NCFM) protein is Large ribosomal subunit protein bL28.